Here is an 85-residue protein sequence, read N- to C-terminus: Small ribosomal subunit protein bS20 (85 aa).

The disordered stretch occupies residues 1-25; that stretch reads MANIKSAIKRAKLSEERRAHNASIK.

Belongs to the bacterial ribosomal protein bS20 family.

Its function is as follows. Binds directly to 16S ribosomal RNA. The polypeptide is Small ribosomal subunit protein bS20 (Bacillus anthracis (strain A0248)).